We begin with the raw amino-acid sequence, 129 residues long: MYERIRFTEYLDLDLNDEHWYCHDCGTKLISARESYKKGCLVAERRPHEIHNPVIEGEYSFAPDENWVRILEFYCPGCTRQIETEYLPPGHPITVDIEVDIDSLKARLKKGVIVIKDGKLTKPEAEVLA.

In terms of assembly, acetophenone carboxylase consists of five subunits; a heterooctameric subcomplex of two alpha (Apc1), two beta (Apc2), two gamma (Apc3) and two delta (Apc4) subunits assembles with the epsilon (Apc5) subunit in an unknown stoichiometry. The cofactor is Mg(2+). Mn(2+) serves as cofactor.

It is found in the cytoplasm. It catalyses the reaction acetophenone + hydrogencarbonate + 2 ATP + H2O = 3-oxo-3-phenylpropanoate + 2 ADP + 2 phosphate + 2 H(+). Its activity is regulated as follows. Inhibited by zinc ions, carbamoylphosphate and beta,gamma-imido-ATP. In terms of biological role, catalyzes the carboxylation of acetophenone to form 3-oxo-3-phenylpropanoate (benzoylacetate) in the anaerobic catabolism of ethylbenzene. Also carboxylates propiophenone at the same rate and 4-acetyl-pyridine at lower rates. This chain is Acetophenone carboxylase beta subunit (apc2), found in Aromatoleum aromaticum (strain DSM 19018 / LMG 30748 / EbN1) (Azoarcus sp. (strain EbN1)).